A 638-amino-acid chain; its full sequence is Threonine--tRNA ligase (638 aa).

In terms of domain architecture, TGS spans 1–61 (MPIITLPDGS…NSDSKVVIIT (61 aa)). Residues 242-533 (DHRKLGKKHS…LIEQYEAKFP (292 aa)) form a catalytic region. Positions 333, 384, and 510 each coordinate Zn(2+).

This sequence belongs to the class-II aminoacyl-tRNA synthetase family. In terms of assembly, homodimer. Requires Zn(2+) as cofactor.

It localises to the cytoplasm. It catalyses the reaction tRNA(Thr) + L-threonine + ATP = L-threonyl-tRNA(Thr) + AMP + diphosphate + H(+). Functionally, catalyzes the attachment of threonine to tRNA(Thr) in a two-step reaction: L-threonine is first activated by ATP to form Thr-AMP and then transferred to the acceptor end of tRNA(Thr). Also edits incorrectly charged L-seryl-tRNA(Thr). The chain is Threonine--tRNA ligase from Prochlorococcus marinus (strain MIT 9215).